A 343-amino-acid polypeptide reads, in one-letter code: GTPase Obg (343 aa).

The Obg domain occupies 1–158 (MFIDEAKIRV…FTLRLELKVL (158 aa)). The tract at residues 121 to 140 (RGGRGNQHFATSTHQAPREH) is disordered. One can recognise an OBG-type G domain in the interval 159 to 333 (ADIGIVGYPN…LKYAMAERVR (175 aa)). GTP is bound by residues 165–172 (GYPNVGKS), 190–194 (FTTLE), 215–218 (DIPG), 286–289 (SKID), and 314–316 (SAV). Mg(2+) is bound by residues serine 172 and threonine 192.

It belongs to the TRAFAC class OBG-HflX-like GTPase superfamily. OBG GTPase family. As to quaternary structure, monomer. Mg(2+) serves as cofactor.

Its subcellular location is the cytoplasm. Its function is as follows. An essential GTPase which binds GTP, GDP and possibly (p)ppGpp with moderate affinity, with high nucleotide exchange rates and a fairly low GTP hydrolysis rate. Plays a role in control of the cell cycle, stress response, ribosome biogenesis and in those bacteria that undergo differentiation, in morphogenesis control. This is GTPase Obg from Acidobacterium capsulatum (strain ATCC 51196 / DSM 11244 / BCRC 80197 / JCM 7670 / NBRC 15755 / NCIMB 13165 / 161).